We begin with the raw amino-acid sequence, 361 residues long: Phenylalanine--tRNA ligase alpha subunit (361 aa).

Residue Glu-260 coordinates Mg(2+).

Belongs to the class-II aminoacyl-tRNA synthetase family. Phe-tRNA synthetase alpha subunit type 1 subfamily. In terms of assembly, tetramer of two alpha and two beta subunits. Mg(2+) is required as a cofactor.

Its subcellular location is the cytoplasm. The catalysed reaction is tRNA(Phe) + L-phenylalanine + ATP = L-phenylalanyl-tRNA(Phe) + AMP + diphosphate + H(+). The chain is Phenylalanine--tRNA ligase alpha subunit from Bartonella quintana (strain Toulouse) (Rochalimaea quintana).